The following is a 716-amino-acid chain: DNA ligase (716 aa).

NAD(+) contacts are provided by residues 50-54, 99-100, and Glu132; these read DAEYD and SL. The N6-AMP-lysine intermediate role is filled by Lys134. The NAD(+) site is built by Arg155, Glu192, Lys308, and Lys332. Zn(2+)-binding residues include Cys437, Cys439, Cys461, and Cys467. One can recognise a BRCT domain in the interval 638–716; that stretch reads KSNSAVAGKT…EDEWLKLIGE (79 aa).

Belongs to the NAD-dependent DNA ligase family. LigA subfamily. Requires Mg(2+) as cofactor. It depends on Mn(2+) as a cofactor.

The catalysed reaction is NAD(+) + (deoxyribonucleotide)n-3'-hydroxyl + 5'-phospho-(deoxyribonucleotide)m = (deoxyribonucleotide)n+m + AMP + beta-nicotinamide D-nucleotide.. Functionally, DNA ligase that catalyzes the formation of phosphodiester linkages between 5'-phosphoryl and 3'-hydroxyl groups in double-stranded DNA using NAD as a coenzyme and as the energy source for the reaction. It is essential for DNA replication and repair of damaged DNA. This chain is DNA ligase, found in Bradyrhizobium diazoefficiens (strain JCM 10833 / BCRC 13528 / IAM 13628 / NBRC 14792 / USDA 110).